Reading from the N-terminus, the 895-residue chain is WD repeat-containing protein 36 (895 aa).

WD repeat units lie at residues 30 to 63 (VVRF…LVAV), 72 to 101 (CCMA…IVHT), 110 to 143 (HFLQ…LQLT), 152 to 186 (SAIL…LLYT), 193 to 230 (GVTA…MKFR), 237 to 272 (TSIS…INQM), 277 to 320 (STAI…RFRM), and 327 to 361 (TNIR…FNKS). Phosphoserine occurs at positions 382 and 399. WD repeat units lie at residues 389–428 (TKFA…GAYF), 441–475 (ATAV…HRGS), 486–522 (VRGV…HSVS), 527–562 (PNIM…VREF), 564–605 (GHQG…DCFL), and 607–645 (DSAP…SVVS).

Part of the small subunit (SSU) processome, composed of more than 70 proteins and the RNA chaperone small nucleolar RNA (snoRNA) U3. Expressed in heart, placenta, liver, skeletal muscle, kidney and pancreas. In ocular tissues, strong expression in iris, sclera, ciliary muscle, ciliary body, retina and optic nerve.

The protein localises to the nucleus. It localises to the nucleolus. In terms of biological role, part of the small subunit (SSU) processome, first precursor of the small eukaryotic ribosomal subunit. During the assembly of the SSU processome in the nucleolus, many ribosome biogenesis factors, an RNA chaperone and ribosomal proteins associate with the nascent pre-rRNA and work in concert to generate RNA folding, modifications, rearrangements and cleavage as well as targeted degradation of pre-ribosomal RNA by the RNA exosome. Involved in the nucleolar processing of SSU 18S rRNA. Involved in T-cell activation and highly coregulated with IL2. In Homo sapiens (Human), this protein is WD repeat-containing protein 36.